The primary structure comprises 119 residues: NADH-quinone oxidoreductase subunit A (119 aa).

The next 3 membrane-spanning stretches (helical) occupy residues 7–27 (FPVL…MSIG), 63–83 (LIAI…PWGV), and 88–108 (IGWP…VGFV).

This sequence belongs to the complex I subunit 3 family. In terms of assembly, NDH-1 is composed of 14 different subunits. Subunits NuoA, H, J, K, L, M, N constitute the membrane sector of the complex.

The protein resides in the cell inner membrane. It catalyses the reaction a quinone + NADH + 5 H(+)(in) = a quinol + NAD(+) + 4 H(+)(out). NDH-1 shuttles electrons from NADH, via FMN and iron-sulfur (Fe-S) centers, to quinones in the respiratory chain. The immediate electron acceptor for the enzyme in this species is believed to be ubiquinone. Couples the redox reaction to proton translocation (for every two electrons transferred, four hydrogen ions are translocated across the cytoplasmic membrane), and thus conserves the redox energy in a proton gradient. The polypeptide is NADH-quinone oxidoreductase subunit A (Cupriavidus pinatubonensis (strain JMP 134 / LMG 1197) (Cupriavidus necator (strain JMP 134))).